We begin with the raw amino-acid sequence, 362 residues long: MNTPKVNILHAPGQAAQLSRALISTCHTRPLLLAGSRVATSLHPTQTNLSSPSPRNFSTTSVTRLKDFFPAKETAYIRQTPPAWPHHGWTEEEMTSVVPEHRKPETVGDWLAWKLVRICRWATDIATGIRPEQQVDKHHPTTATSADKPLTEAQWLVRFIFLESIAGVPGMVAGMLRHLHSLRRLKRDNGWIETLLEESYNERMHLLTFMKMCEPGLLMKTLILGAQGVFFNAMFLSYLISPKITHRFVGYLEEEAVHTYTRCIREIEEGHLPKWSDEKFEIPEMAVRYWRMPEGKRTMKDLIHYIRADEAVHRGVNHTLSNLDQKEDPNPFVSDYKEGEGGRRPVNPALKPTGFERAEVIG.

The N-terminal 64 residues, 1–64 (MNTPKVNILH…RNFSTTSVTR (64 aa)), are a transit peptide targeting the mitochondrion. Residues 156-176 (LVRFIFLESIAGVPGMVAGML) traverse the membrane as a helical segment. The Fe cation site is built by glutamate 163, glutamate 202, and histidine 205. A helical membrane pass occupies residues 222–242 (LILGAQGVFFNAMFLSYLISP). Fe cation-binding residues include glutamate 253, glutamate 310, and histidine 313.

The protein belongs to the alternative oxidase family. In terms of assembly, homodimer; disulfide-linked. The cofactor is Fe cation.

Its subcellular location is the mitochondrion inner membrane. Its function is as follows. Catalyzes cyanide-resistant oxygen consumption. May increase respiration when the cytochrome respiratory pathway is restricted, or in response to low temperatures. The polypeptide is Alternative oxidase, mitochondrial (aod-1) (Neurospora crassa (strain ATCC 24698 / 74-OR23-1A / CBS 708.71 / DSM 1257 / FGSC 987)).